A 152-amino-acid chain; its full sequence is D-aminoacyl-tRNA deacylase (152 aa).

The Gly-cisPro motif, important for rejection of L-amino acids signature appears at 142–143; it reads GP.

This sequence belongs to the DTD family. As to quaternary structure, homodimer.

It is found in the cytoplasm. The enzyme catalyses glycyl-tRNA(Ala) + H2O = tRNA(Ala) + glycine + H(+). It carries out the reaction a D-aminoacyl-tRNA + H2O = a tRNA + a D-alpha-amino acid + H(+). Functionally, an aminoacyl-tRNA editing enzyme that deacylates mischarged D-aminoacyl-tRNAs. Also deacylates mischarged glycyl-tRNA(Ala), protecting cells against glycine mischarging by AlaRS. Acts via tRNA-based rather than protein-based catalysis; rejects L-amino acids rather than detecting D-amino acids in the active site. By recycling D-aminoacyl-tRNA to D-amino acids and free tRNA molecules, this enzyme counteracts the toxicity associated with the formation of D-aminoacyl-tRNA entities in vivo and helps enforce protein L-homochirality. This is D-aminoacyl-tRNA deacylase from Burkholderia multivorans (strain ATCC 17616 / 249).